Reading from the N-terminus, the 157-residue chain is Heat shock 22 kDa protein, chloroplastic (157 aa).

A sHSP domain is found at 40-155 (GKAGHTHAPM…KPEPKRIAVT (116 aa)).

The protein belongs to the small heat shock protein (HSP20) family.

The protein resides in the plastid. The protein localises to the chloroplast. The sequence is that of Heat shock 22 kDa protein, chloroplastic from Chlamydomonas reinhardtii (Chlamydomonas smithii).